A 206-amino-acid polypeptide reads, in one-letter code: MELKLLQDNGTLGAGVQASPEVFEREYNEALVHQVVVAYQANARSGNRAQKDREQVKHTTKKPWRQKGTGRARAGMSSSPLWRGGGRIFPNSPEENFSQKVNKKMYRAGMRSILSQLAREGRLNVVDQFSLDAPKTKVLADKVKAMGLDSVLIIVDQVSENLYLASRNLHKVAVCEPQHADPLALVQYKKVLVSKAAIAKIEELLK.

Residues 43 to 94 form a disordered region; that stretch reads ARSGNRAQKDREQVKHTTKKPWRQKGTGRARAGMSSSPLWRGGGRIFPNSPE. Over residues 58 to 70 the composition is skewed to basic residues; it reads HTTKKPWRQKGTG.

It belongs to the universal ribosomal protein uL4 family. In terms of assembly, part of the 50S ribosomal subunit.

One of the primary rRNA binding proteins, this protein initially binds near the 5'-end of the 23S rRNA. It is important during the early stages of 50S assembly. It makes multiple contacts with different domains of the 23S rRNA in the assembled 50S subunit and ribosome. In terms of biological role, forms part of the polypeptide exit tunnel. The protein is Large ribosomal subunit protein uL4 of Polynucleobacter asymbioticus (strain DSM 18221 / CIP 109841 / QLW-P1DMWA-1) (Polynucleobacter necessarius subsp. asymbioticus).